We begin with the raw amino-acid sequence, 225 residues long: Two-component response regulator ARR8 (225 aa).

Residues 10 to 145 enclose the Response regulatory domain; it reads HVLAVDDSLF…DLTKLKPHMM (136 aa). D78 carries the post-translational modification 4-aspartylphosphate.

This sequence belongs to the ARR family. Type-A subfamily. Two-component system major event consists of a His-to-Asp phosphorelay between a sensor histidine kinase (HK) and a response regulator (RR). In plants, the His-to-Asp phosphorelay involves an additional intermediate named Histidine-containing phosphotransfer protein (HPt). This multistep phosphorelay consists of a His-Asp-His-Asp sequential transfer of a phosphate group between first a His and an Asp of the HK protein, followed by the transfer to a conserved His of the HPt protein and finally the transfer to an Asp in the receiver domain of the RR protein. As to expression, predominantly expressed in roots.

Its subcellular location is the nucleus. Its function is as follows. Functions as a response regulator involved in His-to-Asp phosphorelay signal transduction system. Phosphorylation of the Asp residue in the receiver domain activates the ability of the protein to promote the transcription of target genes. Type-A response regulators seem to act as negative regulators of the cytokinin signaling. The polypeptide is Two-component response regulator ARR8 (ARR8) (Arabidopsis thaliana (Mouse-ear cress)).